The chain runs to 188 residues: Small ribosomal subunit protein uS12m (188 aa).

The N-terminal 63 residues, 1–63 (MSGGRWISNL…AAFRLPQSSG (63 aa)), are a transit peptide targeting the mitochondrion.

Belongs to the universal ribosomal protein uS12 family.

It localises to the mitochondrion. Functionally, protein S12 is involved in the translation initiation step. This Oenothera elata subsp. hookeri (Hooker's evening primrose) protein is Small ribosomal subunit protein uS12m (RPS12).